Reading from the N-terminus, the 329-residue chain is Short-chain dehydrogenase/reductase prx4 (329 aa).

Residues 1 to 21 (MIPRWQPASIALLLHLDTLRC) form the signal peptide. 3 residues coordinate NADP(+): Ser-58, Ile-60, and Asn-81. An N-linked (GlcNAc...) asparagine glycan is attached at Asn-91. NADP(+) is bound by residues Asp-98, Asn-121, Lys-161, Tyr-194, Lys-198, and Thr-229. Tyr-194 (proton acceptor) is an active-site residue. Lys-198 serves as the catalytic Lowers pKa of active site Tyr. The helical transmembrane segment at 238-258 (GPLMAAGLPVSSAHMVGLAVV) threads the bilayer.

This sequence belongs to the short-chain dehydrogenases/reductases (SDR) family.

The protein resides in the membrane. Its pathway is sesquiterpene biosynthesis. Short-chain dehydrogenase/reductase; part of the gene cluster that mediates the biosynthesis of PR-toxin, a bicyclic sesquiterpene belonging to the eremophilane class and acting as a mycotoxin. The first step of the pathway is catalyzed by the aristolochene synthase which performs the cyclization of trans,trans-farnesyl diphosphate (FPP) to the bicyclic sesquiterpene aristolochene. Following the formation of aristolochene, the non-oxygenated aristolochene is converted to the trioxygenated intermediate eremofortin B, via 7-epi-neopetasone. This conversion appears to involve three enzymes, a hydroxysterol oxidase-like enzyme, the quinone-oxidase prx3 that forms the quinone-type-structure in the bicyclic nucleus of aristolochene with the C8-oxo group and the C-3 hydroxyl group, and the P450 monooxygenase prx9 that introduces the epoxide at the double bond between carbons 1 and 2. No monoxy or dioxy-intermediates have been reported to be released to the broth, so these three early oxidative reactions may be coupled together. Eremofortin B is further oxidized by another P450 monooxygenase, that introduces a second epoxide between carbons 7 and 11 prior to acetylation to eremofortin A by the acetyltransferase prx11. The second epoxidation may be performed by a second P450 monooxygenase. After the acetylation step, eremofortin A is converted to eremofortin C and then to PR-toxin. First the conversion of eremofortin A to eremofortin C proceeds by oxidation of the side chain of the molecule at C-12 and is catalyzed by the short-chain oxidoreductase prx1. The cytochrome P450 monooxygenase prx8 also plays a role in this step. The primary alcohol formed at C-12 is finally oxidized by the short-chain alcohol dehydrogenase prx4 that forms PR-toxin. The protein is Short-chain dehydrogenase/reductase prx4 of Penicillium rubens (strain ATCC 28089 / DSM 1075 / NRRL 1951 / Wisconsin 54-1255) (Penicillium chrysogenum).